Reading from the N-terminus, the 687-residue chain is Mitochondrial 15S rRNA processing factor ppr3 (687 aa).

A mitochondrion-targeting transit peptide spans 1–49 (MLNKCSGSLTLLAVRRFCGPCRRLHYHKDNPNNINIAKNLLNNNIQARC). 4 PPR repeats span residues 262-296 (NGLV…SITP), 297-331 (SKDF…ATSI), 334-368 (SAET…PIDP), and 372-407 (TTFV…GLRP).

Belongs to the CCM1 family. As to quaternary structure, binds to mitochondrial small subunit 15S rRNA.

It is found in the mitochondrion. Its function is as follows. Regulates mitochondrial small subunit maturation by controlling 15S rRNA 5'-end processing. Localizes to the 5' precursor of the 15S rRNA in a position that is subsequently occupied by mS47 in the mature yeast mtSSU. Uses structure and sequence-specific RNA recognition, binding to a single-stranded region of the precursor and specifically recognizing bases -6 to -1. The exchange of Ccm1 for mS47 is coupled to the irreversible removal of precursor rRNA that is accompanied by conformational changes of the mitoribosomal proteins uS5m and mS26. These conformational changes signal completion of 5'-end rRNA processing through protection of the mature 5'-end of the 15S rRNA and stabilization of mS47. The removal of the 5' precursor together with the dissociation of Ccm1 may be catalyzed by the 5'-3' exoribonuclease Pet127. Involved in the specific removal of group I introns in mitochondrial encoded transcripts. The polypeptide is Mitochondrial 15S rRNA processing factor ppr3 (Schizosaccharomyces pombe (strain 972 / ATCC 24843) (Fission yeast)).